The primary structure comprises 119 residues: Large ribosomal subunit protein uL18 (119 aa).

It belongs to the universal ribosomal protein uL18 family. As to quaternary structure, part of the 50S ribosomal subunit; part of the 5S rRNA/L5/L18/L25 subcomplex. Contacts the 5S and 23S rRNAs.

This is one of the proteins that bind and probably mediate the attachment of the 5S RNA into the large ribosomal subunit, where it forms part of the central protuberance. This chain is Large ribosomal subunit protein uL18, found in Chelativorans sp. (strain BNC1).